A 147-amino-acid polypeptide reads, in one-letter code: Ubiquitin-conjugating enzyme E2 D4 (147 aa).

In terms of domain architecture, UBC core spans 1–147 (MALKRIQKEL…AREWTQKYAM (147 aa)). The active-site Glycyl thioester intermediate is the C85.

This sequence belongs to the ubiquitin-conjugating enzyme family. Interacts with map3k10/mlk2. As to expression, at embryonic stages 28 to 35, expressed in the somites, eye primordia, otic vesicle and branchial arches. By stage 35, also weakly expressed in the pronephros.

It catalyses the reaction S-ubiquitinyl-[E1 ubiquitin-activating enzyme]-L-cysteine + [E2 ubiquitin-conjugating enzyme]-L-cysteine = [E1 ubiquitin-activating enzyme]-L-cysteine + S-ubiquitinyl-[E2 ubiquitin-conjugating enzyme]-L-cysteine.. It functions in the pathway protein modification; protein ubiquitination. Functionally, catalyzes the covalent attachment of ubiquitin to other proteins. Regulates pronephros development, possibly by promoting ubiquitination and thus inactivation or degradation of map3k10/mlk2. This Xenopus laevis (African clawed frog) protein is Ubiquitin-conjugating enzyme E2 D4 (ube2d4).